A 166-amino-acid polypeptide reads, in one-letter code: Ureidoglycolate lyase (166 aa).

Belongs to the ureidoglycolate lyase family. In terms of assembly, homodimer. It depends on Ni(2+) as a cofactor.

It catalyses the reaction (S)-ureidoglycolate = urea + glyoxylate. It participates in nitrogen metabolism; (S)-allantoin degradation. In terms of biological role, catalyzes the catabolism of the allantoin degradation intermediate (S)-ureidoglycolate, generating urea and glyoxylate. Involved in the utilization of allantoin as nitrogen source. The protein is Ureidoglycolate lyase of Azotobacter vinelandii (strain DJ / ATCC BAA-1303).